Reading from the N-terminus, the 239-residue chain is uncharacterized protein (239 aa).

One can recognise an S4 RNA-binding domain in the interval Met1–Met65. Asp103 functions as the Nucleophile in the catalytic mechanism.

It belongs to the pseudouridine synthase RsuA family.

It catalyses the reaction a uridine in RNA = a pseudouridine in RNA. This is an uncharacterized protein from Bacillus subtilis (strain 168).